Reading from the N-terminus, the 451-residue chain is GTPase Der (451 aa).

EngA-type G domains follow at residues 5–170 (PVVA…VAPP) and 186–359 (IKLA…AAAF). Residues 11–18 (GRPNVGKS), 58–62 (DTGGF), 122–125 (NKAE), 192–199 (GRPNVGKS), 239–243 (DTAGL), and 304–307 (NKWD) each bind GTP. One can recognise a KH-like domain in the interval 360 to 444 (AKLSTPRLTR…PLRIEFKSSR (85 aa)).

It belongs to the TRAFAC class TrmE-Era-EngA-EngB-Septin-like GTPase superfamily. EngA (Der) GTPase family. In terms of assembly, associates with the 50S ribosomal subunit.

Functionally, GTPase that plays an essential role in the late steps of ribosome biogenesis. This chain is GTPase Der, found in Bordetella bronchiseptica (strain ATCC BAA-588 / NCTC 13252 / RB50) (Alcaligenes bronchisepticus).